The sequence spans 430 residues: MHDIRAIRETPAAFDAALALRGLSAASADILAIDEARRAAITQAETAQADRNAASKEVGKAKASGDEAEFERLRALVSTKKDEIARLDEEAKAKDAELTAILEALPNLPSPDVPAGADEDDNVEQHRRGTPRAFDFKPLEHFDIPGIAASMDFETAAKLSGARFVTLKGAVARVHRALAQFMLDTHTEENGLTEINAPVLVRDETMYGTGQLPKFAEDSYQTTNGWWLIPTSEVTLTSLDSGNIVDEATLPHRYAAHSLCFRSEAGSAGRDTAGMLRQHQFEKVEMVSVTHPDQSNAEQQRMLACAEGILDKLEIPYRTVLLCAGDMGFGATRTYDIEAWLPGQDTYREISSVSTCGAFQARRMNARFKPSDGGKPEFVHTLNGSGLAVGRCLIAVLENGQNADGSVTLPAALHPWLGGKTRITAEGNLA.

231 to 233 (TSE) contacts L-serine. 262 to 264 (RSE) provides a ligand contact to ATP. E285 is a binding site for L-serine. Residue 349-352 (EISS) participates in ATP binding. L-serine is bound at residue S385.

Belongs to the class-II aminoacyl-tRNA synthetase family. Type-1 seryl-tRNA synthetase subfamily. In terms of assembly, homodimer. The tRNA molecule binds across the dimer.

Its subcellular location is the cytoplasm. It carries out the reaction tRNA(Ser) + L-serine + ATP = L-seryl-tRNA(Ser) + AMP + diphosphate + H(+). It catalyses the reaction tRNA(Sec) + L-serine + ATP = L-seryl-tRNA(Sec) + AMP + diphosphate + H(+). Its pathway is aminoacyl-tRNA biosynthesis; selenocysteinyl-tRNA(Sec) biosynthesis; L-seryl-tRNA(Sec) from L-serine and tRNA(Sec): step 1/1. In terms of biological role, catalyzes the attachment of serine to tRNA(Ser). Is also able to aminoacylate tRNA(Sec) with serine, to form the misacylated tRNA L-seryl-tRNA(Sec), which will be further converted into selenocysteinyl-tRNA(Sec). The protein is Serine--tRNA ligase of Jannaschia sp. (strain CCS1).